The sequence spans 515 residues: ATP synthase subunit alpha (515 aa).

171–178 (GDRQTGKT) lines the ATP pocket.

The protein belongs to the ATPase alpha/beta chains family. F-type ATPases have 2 components, CF(1) - the catalytic core - and CF(0) - the membrane proton channel. CF(1) has five subunits: alpha(3), beta(3), gamma(1), delta(1), epsilon(1). CF(0) has three main subunits: a(1), b(2) and c(9-12). The alpha and beta chains form an alternating ring which encloses part of the gamma chain. CF(1) is attached to CF(0) by a central stalk formed by the gamma and epsilon chains, while a peripheral stalk is formed by the delta and b chains.

It is found in the cell inner membrane. The enzyme catalyses ATP + H2O + 4 H(+)(in) = ADP + phosphate + 5 H(+)(out). Functionally, produces ATP from ADP in the presence of a proton gradient across the membrane. The alpha chain is a regulatory subunit. The polypeptide is ATP synthase subunit alpha (Xanthomonas oryzae pv. oryzae (strain MAFF 311018)).